We begin with the raw amino-acid sequence, 1388 residues long: ABC transporter G family member 52 (1388 aa).

The segment at 1-24 (MDDAGEICSFSRSSSSAREDDEED) is disordered. In terms of domain architecture, ABC transporter 1 spans 135 to 406 (TNALCITKKI…FKSVGFKCPE (272 aa)). 168-175 (GPPGSGKT) is an ATP binding site. In terms of domain architecture, ABC transmembrane type-2 1 spans 484–697 (ELLKANIYRE…ALNALAVNEF (214 aa)). Transmembrane regions (helical) follow at residues 503 to 523 (LYIF…TVFI), 541 to 561 (ALFY…GPAI), 590 to 610 (IPIS…VIGF), 621 to 641 (FLVL…IVAL), 646 to 666 (VIAS…CGFI), 675 to 695 (WWIW…LAVN), and 732 to 752 (ISIG…TICL). The 253-residue stretch at 791 to 1043 (ITFEDIRYSV…ELIKYFEAIQ (253 aa)) folds into the ABC transporter 2 domain. 836–843 (GVSGAGKT) is a binding site for ATP. Residues 1116–1330 (TQWLACLWKQ…TLNGLLTSQF (215 aa)) enclose the ABC transmembrane type-2 2 domain. 7 consecutive transmembrane segments (helical) span residues 1136–1156 (IVVR…MFWG), 1167–1183 (LFSI…AMGV), 1223–1243 (FPYI…MVGY), 1250–1270 (FLWY…YGMM), 1280–1300 (MSAV…GFLI), 1305–1325 (IPVW…LNGL), and 1357–1377 (LLWV…FLFG).

This sequence belongs to the ABC transporter superfamily. ABCG family. PDR (TC 3.A.1.205) subfamily.

Its subcellular location is the membrane. May be a general defense protein. The polypeptide is ABC transporter G family member 52 (Oryza sativa subsp. japonica (Rice)).